The sequence spans 303 residues: Probable alpha-L-glutamate ligase 1 (303 aa).

The region spanning 104–287 (LQLLSRKGVG…IAGLIYSFIE (184 aa)) is the ATP-grasp domain. ATP is bound by residues K141, 178 to 179 (EF), D187, and 211 to 213 (RSN). Mg(2+) contacts are provided by D248, E260, and N262. Residues D248, E260, and N262 each coordinate Mn(2+).

This sequence belongs to the RimK family. It depends on Mg(2+) as a cofactor. Mn(2+) is required as a cofactor.

The polypeptide is Probable alpha-L-glutamate ligase 1 (Hahella chejuensis (strain KCTC 2396)).